Consider the following 269-residue polypeptide: NAD kinase (269 aa).

Aspartate 45 serves as the catalytic Proton acceptor. Residues 45–46, 122–123, arginine 149, aspartate 151, and alanine 186 contribute to the NAD(+) site; these read DG and NE.

It belongs to the NAD kinase family. A divalent metal cation is required as a cofactor.

It localises to the cytoplasm. It catalyses the reaction NAD(+) + ATP = ADP + NADP(+) + H(+). Involved in the regulation of the intracellular balance of NAD and NADP, and is a key enzyme in the biosynthesis of NADP. Catalyzes specifically the phosphorylation on 2'-hydroxyl of the adenosine moiety of NAD to yield NADP. The chain is NAD kinase from Staphylococcus carnosus (strain TM300).